The following is a 576-amino-acid chain: Carboxypeptidase S (576 aa).

Topologically, residues 1–19 are cytoplasmic; that stretch reads MIALPVEKAPRKSLWQRHR. A Glycyl lysine isopeptide (Lys-Gly) (interchain with G-Cter in ubiquitin) cross-link involves residue K8. The chain crosses the membrane as a helical span at residues 20–40; the sequence is AFISGIVALIIIGTFFLTSGL. At 41 to 576 the chain is on the lumenal side; that stretch reads HPAPPHEAKR…EYIVNVNEYA (536 aa). Positions 44–65 are disordered; sequence PPHEAKRPHHGKGPMHSPKCEK. N88 is a glycosylation site (N-linked (GlcNAc...) asparagine). H168 is a Zn(2+) binding site. D170 is a catalytic residue. Residue N176 is glycosylated (N-linked (GlcNAc...) asparagine). D205 contributes to the Zn(2+) binding site. The N-linked (GlcNAc...) asparagine glycan is linked to N228. E239 serves as the catalytic Proton acceptor. Residues E240 and D268 each contribute to the Zn(2+) site. Residues N381 and N525 are each glycosylated (N-linked (GlcNAc...) asparagine). H547 serves as a coordination point for Zn(2+).

This sequence belongs to the peptidase M20A family. As to quaternary structure, yscS is synthesized as one polypeptide chain precursor which after carbohydrate modification in the secretory pathway yields two active precursor molecules. The proteolytically unprocessed forms are associated with the membrane, whereas the mature forms of the enzyme are soluble. Zn(2+) is required as a cofactor. In terms of processing, glycosylated. Post-translationally, ubiquitinated. Ubiquitination mediates sorting into internal vesicles in late endosomes. TUL1 is required for ubiquitination.

It localises to the vacuole membrane. The enzyme catalyses Release of a C-terminal amino acid from a peptide in which glycine is the penultimate amino acid, e.g. Z-Gly-|-Leu.. In terms of biological role, necessary for use of certain peptides as sole nitrogen source. May also cleave intracellularly generated peptides to recycle amino acids for protein synthesis. The protein is Carboxypeptidase S (CPS1) of Saccharomyces cerevisiae (strain ATCC 204508 / S288c) (Baker's yeast).